Here is a 261-residue protein sequence, read N- to C-terminus: 5'-nucleotidase SurE (261 aa).

The a divalent metal cation site is built by aspartate 18, aspartate 19, serine 50, and asparagine 102.

This sequence belongs to the SurE nucleotidase family. It depends on a divalent metal cation as a cofactor.

The protein localises to the cytoplasm. It catalyses the reaction a ribonucleoside 5'-phosphate + H2O = a ribonucleoside + phosphate. Nucleotidase that shows phosphatase activity on nucleoside 5'-monophosphates. The chain is 5'-nucleotidase SurE from Rhodospirillum rubrum (strain ATCC 11170 / ATH 1.1.1 / DSM 467 / LMG 4362 / NCIMB 8255 / S1).